The primary structure comprises 240 residues: Fatty acid metabolism regulator protein (240 aa).

Positions 6–74 (KGPASFAEKY…HGKPTRVNNF (69 aa)) constitute an HTH gntR-type domain. A DNA-binding region (H-T-H motif) is located at residues 34 to 53 (ERELSELIGVTRTTLREVLQ).

As to quaternary structure, homodimer.

Its subcellular location is the cytoplasm. In terms of biological role, multifunctional regulator of fatty acid metabolism. The sequence is that of Fatty acid metabolism regulator protein from Shewanella amazonensis (strain ATCC BAA-1098 / SB2B).